We begin with the raw amino-acid sequence, 95 residues long: Bombyxin C-2 (95 aa).

Residues 1-19 (MKLVILLVVVSAMLVLGGA) form the signal peptide. Position 20 is a pyrrolidone carboxylic acid (Gln-20). 3 disulfides stabilise this stretch: Cys-27–Cys-76, Cys-39–Cys-89, and Cys-75–Cys-80. Positions 47-67 (SGSQYAGYGWPWLPPFSSSRG) are cleaved as a propeptide — c peptide like.

This sequence belongs to the insulin family. In terms of assembly, heterodimer of a B chain and an A chain linked by two disulfide bonds.

The protein localises to the secreted. In terms of biological role, brain peptide responsible for activation of prothoracic glands to produce ecdysone in insects. The protein is Bombyxin C-2 (BBXC2) of Bombyx mori (Silk moth).